The following is a 318-amino-acid chain: Thymidylate synthase (318 aa).

DUMP-binding positions include Arg25 and 180-181 (RR). The Nucleophile role is filled by Cys200. Residues 220–223 (RSGD), Asn231, and 261–263 (HIY) each bind dUMP. Asp223 serves as a coordination point for (6R)-5,10-methylene-5,6,7,8-tetrahydrofolate. A (6R)-5,10-methylene-5,6,7,8-tetrahydrofolate-binding site is contributed by Ala317.

It belongs to the thymidylate synthase family. Bacterial-type ThyA subfamily. In terms of assembly, homodimer.

Its subcellular location is the cytoplasm. The enzyme catalyses dUMP + (6R)-5,10-methylene-5,6,7,8-tetrahydrofolate = 7,8-dihydrofolate + dTMP. It participates in pyrimidine metabolism; dTTP biosynthesis. Catalyzes the reductive methylation of 2'-deoxyuridine-5'-monophosphate (dUMP) to 2'-deoxythymidine-5'-monophosphate (dTMP) while utilizing 5,10-methylenetetrahydrofolate (mTHF) as the methyl donor and reductant in the reaction, yielding dihydrofolate (DHF) as a by-product. This enzymatic reaction provides an intracellular de novo source of dTMP, an essential precursor for DNA biosynthesis. The protein is Thymidylate synthase of Bacillus cereus (strain ZK / E33L).